The following is a 583-amino-acid chain: Probable GTP diphosphokinase CRSH, chloroplastic (583 aa).

The transit peptide at 1 to 58 directs the protein to the chloroplast; sequence MSVIRPSPIPIPRCRSQVLHRRLYSIQLIQRRRRRWNPRSEVEDTAIESTARSPEAAG. Residues 112–212 enclose the HD domain; sequence PLSKALSLSI…MDLVSKLDEM (101 aa). 2 consecutive EF-hand domains span residues 470 to 505 and 507 to 539; these read TTTN…LGAP and EDAE…VEFM. Residues D483, N485, D487, M489, E494, D517, N519, D521, S523, and E528 each coordinate Ca(2+).

It belongs to the RelA/SpoT family. As to expression, expressed in shoots, cotyledons, rosette and cauline leaves, stems, sepals, pistils and siliques.

It is found in the plastid. Its subcellular location is the chloroplast. The enzyme catalyses GTP + ATP = guanosine 3'-diphosphate 5'-triphosphate + AMP. Its activity is regulated as follows. Activated by calcium. In terms of biological role, possesses calcium-dependent ppGpp (guanosine 3'-diphosphate 5'-diphosphate) synthetase activity in vitro and is able to functionally complement E.coli relA mutants. Plays an important role in the timing adjustment of pistil and pollen maturation required for successful pollination. May be involved in a rapid plant ppGpp-mediated response to pathogens and other stresses. The chain is Probable GTP diphosphokinase CRSH, chloroplastic (CRSH) from Arabidopsis thaliana (Mouse-ear cress).